The following is a 180-amino-acid chain: Crossover junction endodeoxyribonuclease RuvC (180 aa).

Catalysis depends on residues Asp-7, Glu-66, and Asp-138. Asp-7, Glu-66, and Asp-138 together coordinate Mg(2+).

It belongs to the RuvC family. Homodimer which binds Holliday junction (HJ) DNA. The HJ becomes 2-fold symmetrical on binding to RuvC with unstacked arms; it has a different conformation from HJ DNA in complex with RuvA. In the full resolvosome a probable DNA-RuvA(4)-RuvB(12)-RuvC(2) complex forms which resolves the HJ. Mg(2+) is required as a cofactor.

It is found in the cytoplasm. It catalyses the reaction Endonucleolytic cleavage at a junction such as a reciprocal single-stranded crossover between two homologous DNA duplexes (Holliday junction).. In terms of biological role, the RuvA-RuvB-RuvC complex processes Holliday junction (HJ) DNA during genetic recombination and DNA repair. Endonuclease that resolves HJ intermediates. Cleaves cruciform DNA by making single-stranded nicks across the HJ at symmetrical positions within the homologous arms, yielding a 5'-phosphate and a 3'-hydroxyl group; requires a central core of homology in the junction. The consensus cleavage sequence is 5'-(A/T)TT(C/G)-3'. Cleavage occurs on the 3'-side of the TT dinucleotide at the point of strand exchange. HJ branch migration catalyzed by RuvA-RuvB allows RuvC to scan DNA until it finds its consensus sequence, where it cleaves and resolves the cruciform DNA. This Burkholderia pseudomallei (strain 1710b) protein is Crossover junction endodeoxyribonuclease RuvC.